The chain runs to 369 residues: Molybdenum import ATP-binding protein ModC 1 (369 aa).

The region spanning 10–240 is the ABC transporter domain; sequence KGYIEVAFNG…PALASRSEAA (231 aa). 42-49 serves as a coordination point for ATP; it reads GPPGCGKT. The Mop domain occupies 297–367; the sequence is ASSILNVFRA…ELCGKLGDDG (71 aa).

Belongs to the ABC transporter superfamily. Molybdate importer (TC 3.A.1.8) family. The complex is composed of two ATP-binding proteins (ModC), two transmembrane proteins (ModB) and a solute-binding protein (ModA).

Its subcellular location is the cell inner membrane. The enzyme catalyses molybdate(out) + ATP + H2O = molybdate(in) + ADP + phosphate + H(+). Its function is as follows. Part of the ABC transporter complex ModABC involved in molybdenum import. Responsible for energy coupling to the transport system. This Bradyrhizobium diazoefficiens (strain JCM 10833 / BCRC 13528 / IAM 13628 / NBRC 14792 / USDA 110) protein is Molybdenum import ATP-binding protein ModC 1.